The primary structure comprises 738 residues: Probable trehalase (738 aa).

The disordered stretch occupies residues Met-1 to Thr-44. Residues Arg-289, Trp-296–Asp-297, Asn-333, Arg-342, Arg-342–Gln-344, and Gly-463 contribute to the substrate site. Active-site proton donor/acceptor residues include Asp-465 and Glu-660.

This sequence belongs to the glycosyl hydrolase 37 family.

The catalysed reaction is alpha,alpha-trehalose + H2O = alpha-D-glucose + beta-D-glucose. The sequence is that of Probable trehalase (NTH2) from Eremothecium gossypii (strain ATCC 10895 / CBS 109.51 / FGSC 9923 / NRRL Y-1056) (Yeast).